We begin with the raw amino-acid sequence, 258 residues long: 6-carboxyhexanoate--CoA ligase (258 aa).

It belongs to the BioW family. In terms of assembly, homodimer. Mg(2+) is required as a cofactor.

The catalysed reaction is heptanedioate + ATP + CoA = 6-carboxyhexanoyl-CoA + AMP + diphosphate. The protein operates within metabolic intermediate metabolism; pimeloyl-CoA biosynthesis; pimeloyl-CoA from pimelate: step 1/1. Its function is as follows. Catalyzes the transformation of pimelate into pimeloyl-CoA with concomitant hydrolysis of ATP to AMP. This Bacillus spizizenii (strain ATCC 23059 / NRRL B-14472 / W23) (Bacillus subtilis subsp. spizizenii) protein is 6-carboxyhexanoate--CoA ligase.